We begin with the raw amino-acid sequence, 440 residues long: Probable D-serine dehydratase (440 aa).

An N6-(pyridoxal phosphate)lysine modification is found at K120.

It belongs to the serine/threonine dehydratase family. DsdA subfamily. Requires pyridoxal 5'-phosphate as cofactor.

It carries out the reaction D-serine = pyruvate + NH4(+). This Shouchella clausii (strain KSM-K16) (Alkalihalobacillus clausii) protein is Probable D-serine dehydratase.